The primary structure comprises 103 residues: MKIVVMGDSDTVVGFRLAGVHEAYEYDESLESVERARNKLRELLERDDVGIILITERLAQRIGSLPEVKFPIILQIPDKFGSIYGEDILRDVVRRAIGVELKR.

This sequence belongs to the V-ATPase F subunit family. Has multiple subunits with at least A(3), B(3), C, D, E, F, H, I and proteolipid K(x).

The protein localises to the cell membrane. In terms of biological role, component of the A-type ATP synthase that produces ATP from ADP in the presence of a proton gradient across the membrane. This Pyrococcus furiosus (strain ATCC 43587 / DSM 3638 / JCM 8422 / Vc1) protein is A-type ATP synthase subunit F.